Here is a 151-residue protein sequence, read N- to C-terminus: Globin CTT-X (151 aa).

Residues 6–150 (TLDAHEVEQV…AFSVIFEVLE (145 aa)) form the Globin domain. 2 residues coordinate heme b: H64 and H99.

Belongs to the globin family. As to quaternary structure, homodimer.

This chain is Globin CTT-X (CTT-10), found in Chironomus thummi thummi (Midge).